The primary structure comprises 1363 residues: DNA-directed RNA polymerase subunit beta (1363 aa).

This sequence belongs to the RNA polymerase beta chain family. In terms of assembly, the RNAP catalytic core consists of 2 alpha, 1 beta, 1 beta' and 1 omega subunit. When a sigma factor is associated with the core the holoenzyme is formed, which can initiate transcription.

The catalysed reaction is RNA(n) + a ribonucleoside 5'-triphosphate = RNA(n+1) + diphosphate. DNA-dependent RNA polymerase catalyzes the transcription of DNA into RNA using the four ribonucleoside triphosphates as substrates. This chain is DNA-directed RNA polymerase subunit beta, found in Neorickettsia risticii (Ehrlichia risticii).